We begin with the raw amino-acid sequence, 178 residues long: Cytochrome b6-f complex iron-sulfur subunit (178 aa).

Residues 20–42 traverse the membrane as a helical segment; it reads LLTFGTATGVALGALYPVANYFM. Positions 65 to 161 constitute a Rieske domain; it reads KTGWLASHQA…VDVDDDAVLV (97 aa). [2Fe-2S] cluster contacts are provided by Cys107, His109, Cys125, and His128. Residues Cys112 and Cys127 are joined by a disulfide bond.

Belongs to the Rieske iron-sulfur protein family. As to quaternary structure, the 4 large subunits of the cytochrome b6-f complex are cytochrome b6, subunit IV (17 kDa polypeptide, PetD), cytochrome f and the Rieske protein, while the 4 small subunits are PetG, PetL, PetM and PetN. The complex functions as a dimer. [2Fe-2S] cluster is required as a cofactor.

It is found in the cellular thylakoid membrane. It carries out the reaction 2 oxidized [plastocyanin] + a plastoquinol + 2 H(+)(in) = 2 reduced [plastocyanin] + a plastoquinone + 4 H(+)(out). Its function is as follows. Component of the cytochrome b6-f complex, which mediates electron transfer between photosystem II (PSII) and photosystem I (PSI), cyclic electron flow around PSI, and state transitions. The polypeptide is Cytochrome b6-f complex iron-sulfur subunit (Prochlorococcus marinus subsp. pastoris (strain CCMP1986 / NIES-2087 / MED4)).